Reading from the N-terminus, the 539-residue chain is Chaperonin GroEL (539 aa).

ATP-binding positions include 29 to 32, 86 to 90, glycine 413, and aspartate 492; these read TLGP and DGTTT.

It belongs to the chaperonin (HSP60) family. Forms a cylinder of 14 subunits composed of two heptameric rings stacked back-to-back. Interacts with the co-chaperonin GroES.

It is found in the cytoplasm. It carries out the reaction ATP + H2O + a folded polypeptide = ADP + phosphate + an unfolded polypeptide.. Together with its co-chaperonin GroES, plays an essential role in assisting protein folding. The GroEL-GroES system forms a nano-cage that allows encapsulation of the non-native substrate proteins and provides a physical environment optimized to promote and accelerate protein folding. This Fusobacterium nucleatum subsp. nucleatum (strain ATCC 25586 / DSM 15643 / BCRC 10681 / CIP 101130 / JCM 8532 / KCTC 2640 / LMG 13131 / VPI 4355) protein is Chaperonin GroEL.